The chain runs to 615 residues: Ras association domain-containing protein 1 homolog (615 aa).

Disordered regions lie at residues methionine 1–glutamine 29 and serine 69–glycine 89. Residues threonine 76 to serine 87 show a composition bias toward low complexity. A Phorbol-ester/DAG-type zinc finger spans residues asparagine 164 to cysteine 214. Residues proline 249–glycine 268 form a disordered region. Residues methionine 251–glycine 268 are compositionally biased toward polar residues. The 101-residue stretch at lysine 396–threonine 496 folds into the Ras-associating domain. An SARAH domain is found at aspartate 498–arginine 545.

In terms of assembly, interacts with rab-39 (GTP-bound form). Interacts (via SARAH domain) with cst-1; the interaction is required for the phosphorylation of cst-1. As to expression, expressed in the pharynx, epithelial cells, ciliated neurons in the head, body wall muscles, hypodermis, vulva, gonadal sheath cells, tail hypodermis and in coelomocytes. In terms of tissue distribution, expressed in the pharynx, neurons and vulva.

The protein resides in the cytoplasm. It localises to the cytoskeleton. In terms of biological role, involved in embryonic morphogenesis. Plays a role in the organization of apical filamentous actin in epithelial cells of the developing embryo. May play a role in let-60-mediated vulval development. May induce nuclear condensation. Positively regulates the oxidative stress response, and this may be in association with the small GTPase rab-39. Not required for muscle integrity. The polypeptide is Ras association domain-containing protein 1 homolog (Caenorhabditis elegans).